Here is a 514-residue protein sequence, read N- to C-terminus: MDKLQRDGKEDTPRQRRFLYPLLFQEDLYAIAYDHYFNRSSSFEPMENSSSNDRFSFLTVKRLISRIRQQNGSIVPFVNCDQTKLVGHNRSFYSELVLGGLTAVPEVPLSIRSEHSLERMNEWTSFRSIHSILPLMEDKIPHSNFILDIRIPHLTHPEILVRTFRRWIQDAPSLHSLRSVLHEHRNLIISSNLDQLILIASKENTRLSLFLWNYYAYECESLLVPLWKRFFYSRSLPYESFIERTPFYRKIEHIVIFYHKYLKKSLWFLKDPSIHYVKHRERSIIALRGTYLLAKKWRYHITKFWQCHFHLWPQPYRIYIDELSNNCFSFLGYLLSVKMKTSVVRIKMPDDSFITDLITKEFDPIAPTTLLIGSLAKEKFCDISGHPISRLAWTGLTDDDILDRFDRIWRNIFHYHSGSSKKDGLYRMKYILRLPCAKTLACKHKSAIRVVRERFGSELFTKSSPKERESIFLSFSKTRSQRERIWHSDIIQINPLINSCRKKHNLQIEPLFDR.

The protein belongs to the intron maturase 2 family. MatK subfamily.

Its subcellular location is the plastid. It is found in the chloroplast. Its function is as follows. Usually encoded in the trnK tRNA gene intron. Probably assists in splicing its own and other chloroplast group II introns. This Dioon spinulosum (Gum palm) protein is Maturase K.